A 201-amino-acid polypeptide reads, in one-letter code: Holliday junction branch migration complex subunit RuvA (201 aa).

The domain I stretch occupies residues Met1 to Gln63. The domain II stretch occupies residues Ser64–Lys142. Residues Ala143–Ser153 are flexible linker. The domain III stretch occupies residues Ser153–Lys201.

The protein belongs to the RuvA family. In terms of assembly, homotetramer. Forms an RuvA(8)-RuvB(12)-Holliday junction (HJ) complex. HJ DNA is sandwiched between 2 RuvA tetramers; dsDNA enters through RuvA and exits via RuvB. An RuvB hexamer assembles on each DNA strand where it exits the tetramer. Each RuvB hexamer is contacted by two RuvA subunits (via domain III) on 2 adjacent RuvB subunits; this complex drives branch migration. In the full resolvosome a probable DNA-RuvA(4)-RuvB(12)-RuvC(2) complex forms which resolves the HJ.

The protein resides in the cytoplasm. In terms of biological role, the RuvA-RuvB-RuvC complex processes Holliday junction (HJ) DNA during genetic recombination and DNA repair, while the RuvA-RuvB complex plays an important role in the rescue of blocked DNA replication forks via replication fork reversal (RFR). RuvA specifically binds to HJ cruciform DNA, conferring on it an open structure. The RuvB hexamer acts as an ATP-dependent pump, pulling dsDNA into and through the RuvAB complex. HJ branch migration allows RuvC to scan DNA until it finds its consensus sequence, where it cleaves and resolves the cruciform DNA. In Listeria innocua serovar 6a (strain ATCC BAA-680 / CLIP 11262), this protein is Holliday junction branch migration complex subunit RuvA.